We begin with the raw amino-acid sequence, 371 residues long: Homeobox protein Nkx-2.1 (371 aa).

The segment at residues 161 to 220 is a DNA-binding region (homeobox); the sequence is RRKRRVLFSQAQVYELERRFKQQKYLSAPEREHLASMIHLTPTQVKIWFQNHRYKMKRQA. Disordered regions lie at residues 219–294 and 310–339; these read QAKD…QHQA and GAGLGAHPGHQPGSAGQSPDLAHHAASPAA. Residues 233-243 are compositionally biased toward gly residues; that stretch reads SGGGGGGGGTG. Residues 244 to 253 show a composition bias toward low complexity; sequence CPQQQQAQQQ. At Ser-254 the chain carries Phosphoserine. Low complexity predominate over residues 272–294; sequence AGAPAPGAASLQGHAQQQAQHQA.

This sequence belongs to the NK-2 homeobox family. In terms of assembly, interacts with WWTR1. In terms of processing, phosphorylated on serine residues by STK3/MST2. As to expression, thyroid and lung.

It localises to the nucleus. In terms of biological role, transcription factor that binds and activates the promoter of thyroid specific genes such as thyroglobulin, thyroperoxidase, and thyrotropin receptor. Crucial in the maintenance of the thyroid differentiation phenotype. May play a role in lung development and surfactant homeostasis. Forms a regulatory loop with GRHL2 that coordinates lung epithelial cell morphogenesis and differentiation. Activates the transcription of GNRHR and plays a role in enhancing the circadian oscillation of its gene expression. Represses the transcription of the circadian transcriptional repressor NR1D1. This Homo sapiens (Human) protein is Homeobox protein Nkx-2.1.